The chain runs to 1213 residues: DNA-directed RNA polymerase subunit beta' (1213 aa).

Residues C60, C62, C75, and C78 each coordinate Zn(2+). 3 residues coordinate Mg(2+): D450, D452, and D454. The Zn(2+) site is built by C819, C893, C900, and C903.

Belongs to the RNA polymerase beta' chain family. As to quaternary structure, the RNAP catalytic core consists of 2 alpha, 1 beta, 1 beta' and 1 omega subunit. When a sigma factor is associated with the core the holoenzyme is formed, which can initiate transcription. It depends on Mg(2+) as a cofactor. Requires Zn(2+) as cofactor.

The catalysed reaction is RNA(n) + a ribonucleoside 5'-triphosphate = RNA(n+1) + diphosphate. Its function is as follows. DNA-dependent RNA polymerase catalyzes the transcription of DNA into RNA using the four ribonucleoside triphosphates as substrates. The protein is DNA-directed RNA polymerase subunit beta' of Streptococcus pyogenes serotype M2 (strain MGAS10270).